A 99-amino-acid chain; its full sequence is Sarcosine oxidase subunit delta (99 aa).

Residues Cys-6, Cys-9, His-59, and Cys-63 each coordinate Zn(2+).

The protein belongs to the SoxD family. Heterotetramer composed of subunits alpha (SoxA), beta (SoxB), gamma (SoxG) and delta (SoxD).

The protein localises to the cytoplasm. The enzyme catalyses sarcosine + (6S)-5,6,7,8-tetrahydrofolate + O2 = (6R)-5,10-methylene-5,6,7,8-tetrahydrofolate + glycine + H2O2. It carries out the reaction sarcosine + O2 + H2O = formaldehyde + glycine + H2O2. Inhibited by Zn(2+), Cu(2+), Cd(2+), Hg(2+), Ag(+), p-chloromercuribenzoate (p-CMB), iodoacetamide, N-ethylmaleimide, CN(-), o-phenanthroline and sodium lauryl sulfate. In the presence of tetrahydrofolate, catalyzes the oxidative demethylation of sarcosine to yield glycine, 5,10-methylenetetrahydrofolate and hydrogen peroxide. In the absence of tetrahydrofolate, catalyzes the oxidative demethylation of sarcosine to yield glycine, formaldehyde and hydrogen peroxide. Can also use N-methyl-L-alanine and N-ethyl-L-glycine. Is very specific for oxygen as an acceptor. The chain is Sarcosine oxidase subunit delta from Corynebacterium sp. (strain U-96).